The primary structure comprises 577 residues: Arginine--tRNA ligase (577 aa).

A 'HIGH' region motif is present at residues 122–132 (PNVAKEMHVGH).

It belongs to the class-I aminoacyl-tRNA synthetase family. Monomer.

The protein localises to the cytoplasm. It catalyses the reaction tRNA(Arg) + L-arginine + ATP = L-arginyl-tRNA(Arg) + AMP + diphosphate. The sequence is that of Arginine--tRNA ligase from Salmonella schwarzengrund (strain CVM19633).